We begin with the raw amino-acid sequence, 295 residues long: Acetyl-coenzyme A carboxylase carboxyl transferase subunit beta (295 aa).

Residues 1–20 (MSWLSKLMPSGIRTENTPAK) form a disordered region. A CoA carboxyltransferase N-terminal domain is found at 28–295 (LWEKCSNCGS…QPHPQDADAA (268 aa)). Zn(2+) is bound by residues C32, C35, C51, and C54. A C4-type zinc finger spans residues 32 to 54 (CSNCGSALYGPELEENLEVCPKC).

It belongs to the AccD/PCCB family. As to quaternary structure, acetyl-CoA carboxylase is a heterohexamer composed of biotin carboxyl carrier protein (AccB), biotin carboxylase (AccC) and two subunits each of ACCase subunit alpha (AccA) and ACCase subunit beta (AccD). Zn(2+) is required as a cofactor.

The protein resides in the cytoplasm. The catalysed reaction is N(6)-carboxybiotinyl-L-lysyl-[protein] + acetyl-CoA = N(6)-biotinyl-L-lysyl-[protein] + malonyl-CoA. It participates in lipid metabolism; malonyl-CoA biosynthesis; malonyl-CoA from acetyl-CoA: step 1/1. Component of the acetyl coenzyme A carboxylase (ACC) complex. Biotin carboxylase (BC) catalyzes the carboxylation of biotin on its carrier protein (BCCP) and then the CO(2) group is transferred by the transcarboxylase to acetyl-CoA to form malonyl-CoA. This Xanthomonas axonopodis pv. citri (strain 306) protein is Acetyl-coenzyme A carboxylase carboxyl transferase subunit beta.